A 236-amino-acid polypeptide reads, in one-letter code: Small ribosomal subunit protein mS41 (236 aa).

Belongs to the mitochondrion-specific ribosomal protein mS41 family. Component of the mitochondrial small ribosomal subunit (mt-SSU). Mature N.crassa 74S mitochondrial ribosomes consist of a small (37S) and a large (54S) subunit. The 37S small subunit contains a 16S ribosomal RNA (16S mt-rRNA) and 32 different proteins. The 54S large subunit contains a 23S rRNA (23S mt-rRNA) and 42 different proteins.

It localises to the mitochondrion. In terms of biological role, component of the mitochondrial ribosome (mitoribosome), a dedicated translation machinery responsible for the synthesis of mitochondrial genome-encoded proteins, including at least some of the essential transmembrane subunits of the mitochondrial respiratory chain. The mitoribosomes are attached to the mitochondrial inner membrane and translation products are cotranslationally integrated into the membrane. In Neurospora crassa (strain ATCC 24698 / 74-OR23-1A / CBS 708.71 / DSM 1257 / FGSC 987), this protein is Small ribosomal subunit protein mS41 (fyv4).